A 326-amino-acid polypeptide reads, in one-letter code: Nine-heme cytochrome c (326 aa).

A signal peptide spans 1-30 (MRNGTSLLLLAAIALAGAACLTAMGGTAKA). Residues H67, H70, C77, C80, H81, H82, C89, C92, H93, H111, C127, C130, H131, C141, C144, H145, C157, C160, H161, H227, H230, H248, C255, C258, H259, H260, C271, C274, H275, H294, C297, C300, H301, C314, C317, and H318 each coordinate heme.

In terms of assembly, monomer. Binds 9 heme groups per subunit.

Its subcellular location is the periplasm. In terms of biological role, may form part of a transmembrane redox complex through which electrons are transferred to the cytoplasm for reduction of sulfate. This chain is Nine-heme cytochrome c, found in Desulfovibrio desulfuricans (strain ATCC 27774 / DSM 6949 / MB).